The sequence spans 573 residues: DNA ligase (573 aa).

Glu-248 is an ATP binding site. Catalysis depends on Lys-250, which acts as the N6-AMP-lysine intermediate. Positions 255, 270, 299, 340, 432, and 438 each coordinate ATP.

This sequence belongs to the ATP-dependent DNA ligase family. Mg(2+) is required as a cofactor.

The enzyme catalyses ATP + (deoxyribonucleotide)n-3'-hydroxyl + 5'-phospho-(deoxyribonucleotide)m = (deoxyribonucleotide)n+m + AMP + diphosphate.. Its function is as follows. DNA ligase that seals nicks in double-stranded DNA during DNA replication, DNA recombination and DNA repair. This Methanocaldococcus jannaschii (strain ATCC 43067 / DSM 2661 / JAL-1 / JCM 10045 / NBRC 100440) (Methanococcus jannaschii) protein is DNA ligase.